The chain runs to 130 residues: S-protein homolog 30 (130 aa).

Residues asparagine 64 and asparagine 77 are each glycosylated (N-linked (GlcNAc...) asparagine).

It belongs to the plant self-incompatibility (S1) protein family.

The protein localises to the secreted. This is S-protein homolog 30 from Arabidopsis thaliana (Mouse-ear cress).